Consider the following 1004-residue polypeptide: Cadmium/zinc-transporting ATPase HMA3 (1004 aa).

The 67-residue stretch at 42-108 folds into the HMA domain; it reads KKTYLDVLGV…ALNKAGLEAS (67 aa). 8 helical membrane-spanning segments follow: residues 120–140, 144–164, 171–191, 193–213, 340–360, 371–391, 683–703, and 707–727; these read RWPS…FFEW, PLQC…VRRG, LSLD…CLGD, TEAG…TLAC, CAKY…LIPA, WKLA…LSTP, IAVN…LAAA, and VLWA…LNSM. The disordered stretch occupies residues 931–952; that stretch reads TGCGASKRSPPAEGSCSGGEGG.

Belongs to the cation transport ATPase (P-type) (TC 3.A.3) family. Type IB subfamily. In terms of tissue distribution, specifically expressed in roots.

The protein resides in the vacuole membrane. It carries out the reaction Zn(2+)(in) + ATP + H2O = Zn(2+)(out) + ADP + phosphate + H(+). The enzyme catalyses Cd(2+)(in) + ATP + H2O = Cd(2+)(out) + ADP + phosphate + H(+). Functionally, root-specific cadmium (Cd) transporter that mediates Cd efflux in root vacuoles. Involved in Cd detoxification by sequestrating Cd into root vacuoles and limiting translocation of Cd from the roots to the shoots, and accumulation in grains. In Oryza sativa subsp. japonica (Rice), this protein is Cadmium/zinc-transporting ATPase HMA3.